The following is a 296-amino-acid chain: Syntenin-2 (296 aa).

PDZ domains are found at residues 112 to 191 and 196 to 271; these read EIHL…VRDR and TVTM…IPTV.

In terms of assembly, monomer and homodimer. Interacts with SDCBP. Interacts with TM4SF1.

Its subcellular location is the cytoplasm. It localises to the nucleus. It is found in the nucleolus. The protein localises to the nucleoplasm. The protein resides in the cell membrane. Its subcellular location is the nucleus speckle. Functionally, binds phosphatidylinositol 4,5-bisphosphate (PIP2). May play a role in the organization of nuclear PIP2, cell division and cell survival. The sequence is that of Syntenin-2 (Sdcbp2) from Rattus norvegicus (Rat).